Consider the following 247-residue polypeptide: tRNA pseudouridine synthase A (247 aa).

Aspartate 52 acts as the Nucleophile in catalysis. Tyrosine 110 lines the substrate pocket.

The protein belongs to the tRNA pseudouridine synthase TruA family. As to quaternary structure, homodimer.

It carries out the reaction uridine(38/39/40) in tRNA = pseudouridine(38/39/40) in tRNA. Its function is as follows. Formation of pseudouridine at positions 38, 39 and 40 in the anticodon stem and loop of transfer RNAs. The sequence is that of tRNA pseudouridine synthase A from Geobacter sp. (strain M21).